Reading from the N-terminus, the 174-residue chain is Thioredoxin O, mitochondrial (174 aa).

The transit peptide at 1–59 (MALAHRLCRLPRLLPLAAAAAASKPYLPGKPSPAPPPPLSSPPPFPSLSRLFSTTPSSS) directs the protein to the mitochondrion. In terms of domain architecture, Thioredoxin spans 60–172 (GDSSMVVVGS…LESTMESLHK (113 aa)). Active-site nucleophile residues include C96 and C99. The cysteines at positions 96 and 99 are disulfide-linked.

This sequence belongs to the thioredoxin family. Plant O-type subfamily.

It localises to the mitochondrion. Its function is as follows. Probable thiol-disulfide oxidoreductase that may participate in various redox reactions. The sequence is that of Thioredoxin O, mitochondrial from Oryza sativa subsp. japonica (Rice).